Here is a 460-residue protein sequence, read N- to C-terminus: Bifunctional protein GlmU (460 aa).

The tract at residues 1–232 (MALNVVILAA…AIEVEGANNR (232 aa)) is pyrophosphorylase. UDP-N-acetyl-alpha-D-glucosamine is bound by residues 8 to 11 (LAAG), K22, Q73, 78 to 79 (GT), 100 to 102 (YGD), G137, E157, N172, and N230. D102 is a binding site for Mg(2+). N230 contacts Mg(2+). The tract at residues 233 to 253 (VQLAQLERAYQAREAEKLMLA) is linker. Residues 254 to 460 (GANLRDPSRI…GWQRPVKIKK (207 aa)) form an N-acetyltransferase region. Positions 336 and 354 each coordinate UDP-N-acetyl-alpha-D-glucosamine. The active-site Proton acceptor is H366. UDP-N-acetyl-alpha-D-glucosamine is bound by residues Y369 and N380. Acetyl-CoA-binding positions include A383, 389-390 (NY), S408, A426, and R443.

In the N-terminal section; belongs to the N-acetylglucosamine-1-phosphate uridyltransferase family. The protein in the C-terminal section; belongs to the transferase hexapeptide repeat family. In terms of assembly, homotrimer. Mg(2+) is required as a cofactor.

Its subcellular location is the cytoplasm. It catalyses the reaction alpha-D-glucosamine 1-phosphate + acetyl-CoA = N-acetyl-alpha-D-glucosamine 1-phosphate + CoA + H(+). It carries out the reaction N-acetyl-alpha-D-glucosamine 1-phosphate + UTP + H(+) = UDP-N-acetyl-alpha-D-glucosamine + diphosphate. It functions in the pathway nucleotide-sugar biosynthesis; UDP-N-acetyl-alpha-D-glucosamine biosynthesis; N-acetyl-alpha-D-glucosamine 1-phosphate from alpha-D-glucosamine 6-phosphate (route II): step 2/2. It participates in nucleotide-sugar biosynthesis; UDP-N-acetyl-alpha-D-glucosamine biosynthesis; UDP-N-acetyl-alpha-D-glucosamine from N-acetyl-alpha-D-glucosamine 1-phosphate: step 1/1. Its pathway is bacterial outer membrane biogenesis; LPS lipid A biosynthesis. Functionally, catalyzes the last two sequential reactions in the de novo biosynthetic pathway for UDP-N-acetylglucosamine (UDP-GlcNAc). The C-terminal domain catalyzes the transfer of acetyl group from acetyl coenzyme A to glucosamine-1-phosphate (GlcN-1-P) to produce N-acetylglucosamine-1-phosphate (GlcNAc-1-P), which is converted into UDP-GlcNAc by the transfer of uridine 5-monophosphate (from uridine 5-triphosphate), a reaction catalyzed by the N-terminal domain. This is Bifunctional protein GlmU from Shewanella baltica (strain OS185).